The chain runs to 500 residues: Cytosol aminopeptidase (500 aa).

Lys-265 and Asp-270 together coordinate Mn(2+). The active site involves Lys-277. Asp-288, Asp-347, and Glu-349 together coordinate Mn(2+). Arg-351 is an active-site residue.

This sequence belongs to the peptidase M17 family. Requires Mn(2+) as cofactor.

Its subcellular location is the cytoplasm. The enzyme catalyses Release of an N-terminal amino acid, Xaa-|-Yaa-, in which Xaa is preferably Leu, but may be other amino acids including Pro although not Arg or Lys, and Yaa may be Pro. Amino acid amides and methyl esters are also readily hydrolyzed, but rates on arylamides are exceedingly low.. It catalyses the reaction Release of an N-terminal amino acid, preferentially leucine, but not glutamic or aspartic acids.. Functionally, presumably involved in the processing and regular turnover of intracellular proteins. Catalyzes the removal of unsubstituted N-terminal amino acids from various peptides. The sequence is that of Cytosol aminopeptidase (pepA) from Rickettsia prowazekii (strain Madrid E).